Consider the following 188-residue polypeptide: Protease-associated domain-containing protein 1 (188 aa).

Residues 1-21 form the signal peptide; that stretch reads MVPGAAGWCCLVLWLPACVAA. The PA domain occupies 83 to 163; sequence IQDQIALVER…RSLEQHGLPW (81 aa). Asn171 carries an N-linked (GlcNAc...) asparagine glycan.

N-glycosylated; required for efficient secretion. In terms of tissue distribution, highly expressed in skeletal muscle, heart and liver. Expressed at intermediate level in kidney.

It is found in the secreted. Its function is as follows. Plays a role in the modulation of physical activity and adiposity. In Homo sapiens (Human), this protein is Protease-associated domain-containing protein 1.